The sequence spans 180 residues: MSAVALEKEPLRIPSSQDFAAFVTRSEVEDLLYHEAELLDTWHLHDWLALFTEDCSYFVPSTDLPRTASADDSLFYIADDAVRLRERVIRLMKKTAHAEYPRSRTRHLVSNIRILAANAEEIQVASAFVTYRMKLGNSDAYVGSTHYRLRRIDGQLRIVEKRCFLDLEALRPHGRVSIIL.

Belongs to the bacterial ring-hydroxylating dioxygenase beta subunit family. As to quaternary structure, the p-cumate 2,3-dioxygenase multicomponent enzyme system is composed of an electron transfer component and a dioxygenase component (iron sulfur protein (ISP)). The electron transfer component is composed of a ferredoxin reductase (CmtAa) and a ferredoxin (CmtAd), and the dioxygenase component is formed of a large alpha subunit (CmtAb) and a small beta subunit (CmtAc).

It functions in the pathway aromatic compound metabolism; p-cumate degradation; acetaldehyde and pyruvate from p-cumate. Component of the p-cumate 2,3-dioxygenase multicomponent enzyme system which catalyzes the incorporation of both atoms of molecular oxygen into p-cumate to form cis-2,3-dihydroxy-2,3-dihydro-p-cumate. The beta subunit seems to have a structural role in the holoenzyme. Also able to catalyze the cis-dihydroxylation of indole-2-carboxylate and indole-3-carboxylate. This chain is p-cumate 2,3-dioxygenase system, small oxygenase component, found in Pseudomonas putida (Arthrobacter siderocapsulatus).